Consider the following 674-residue polypeptide: Inorganic pyrophosphatase TTM2 (674 aa).

A CYTH domain is found at 248–410 (SPTYILKSRK…PRTYIEQIQL (163 aa)). 2 disordered regions span residues 457-498 (KNLK…SPAN) and 619-640 (RSRLARTGSSNSGNRGRSSKSS). A compositionally biased stretch (basic and acidic residues) spans 484–496 (SDRRYEERNHDSP). Low complexity predominate over residues 623 to 640 (ARTGSSNSGNRGRSSKSS). The helical transmembrane segment at 650-670 (LPLVLTVAICSIGIIVIKSYI) threads the bilayer.

The cofactor is Mg(2+). Predominantly expressed in the shoot apices of inflorescences.

Its subcellular location is the mitochondrion outer membrane. The enzyme catalyses diphosphate + H2O = 2 phosphate + H(+). Its function is as follows. Exhibits pyrophosphatase activity with stronger affinity for pyrophosphate (PPi), moderate affinity for ATP and ADP, and weak affinity for tripolyphosphate (PPPi). No activity observed toward uridine substrate. Negative regulator of the salicylic acid (SA)-mediated amplification of defense responses against both virulent and avirulent pathogens, including oomycetes (e.g. H.arabidopsidis) and bacteria (e.g. P.syringae). Represses systemic acquired resistance (SAR). The polypeptide is Inorganic pyrophosphatase TTM2 (Arabidopsis thaliana (Mouse-ear cress)).